The following is a 406-amino-acid chain: Tryptophan 2,3-dioxygenase (406 aa).

Phosphoserine is present on S19. Substrate contacts are provided by residues F72–H76 and R144. H328 is a binding site for heme. Position 342 (T342) interacts with substrate.

The protein belongs to the tryptophan 2,3-dioxygenase family. Homotetramer. Dimer of dimers. The cofactor is heme.

The enzyme catalyses L-tryptophan + O2 = N-formyl-L-kynurenine. Its pathway is amino-acid degradation; L-tryptophan degradation via kynurenine pathway; L-kynurenine from L-tryptophan: step 1/2. Functionally, heme-dependent dioxygenase that catalyzes the oxidative cleavage of the L-tryptophan (L-Trp) pyrrole ring and converts L-tryptophan to N-formyl-L-kynurenine. Catalyzes the oxidative cleavage of the indole moiety. The protein is Tryptophan 2,3-dioxygenase of Bos taurus (Bovine).